We begin with the raw amino-acid sequence, 1545 residues long: ATP-binding cassette sub-family C member 9 (1545 aa).

Residues 1-30 are Extracellular-facing; that stretch reads MSLSFCGNNISSYNIYHGVLQNPCFVDALN. N-linked (GlcNAc...) asparagine glycosylation is present at Asn-9. A helical transmembrane segment spans residues 31–51; sequence LVPHVFLLFITFPILFIGWGS. Over 52-72 the chain is Cytoplasmic; the sequence is QSSKVQIHHNTWLHFPGHNLR. A helical membrane pass occupies residues 73 to 93; it reads WILTFALLFVHVCEIAEGIVS. Topologically, residues 94 to 101 are extracellular; it reads DSQRASRH. The helical transmembrane segment at 102 to 122 threads the bilayer; it reads LHLFMPAVMGFVATTTSIVYY. Topologically, residues 123–132 are cytoplasmic; that stretch reads HNIETSNFPK. The helical transmembrane segment at 133 to 153 threads the bilayer; the sequence is LLLALFLYWVMAFITKTIKLV. Topologically, residues 154 to 167 are extracellular; it reads KYWQLGWGMSDLRF. The chain crosses the membrane as a helical span at residues 168–188; it reads CITGVMVILNGLLMAVEINVI. Residues 189–301 lie on the Cytoplasmic side of the membrane; it reads RVRRYVFFMN…AFGRPILLSS (113 aa). Residues 297–594 enclose the ABC transmembrane type-1 1 domain; it reads ILLSSTFRYL…LSTVVRFAVK (298 aa). Residues 302 to 322 traverse the membrane as a helical segment; the sequence is TFRYLADLLGFAGPLCISGIV. Topologically, residues 323–347 are extracellular; that stretch reads QRVNEPKNNTTRFSETLSSKEFLEN. 2 N-linked (GlcNAc...) asparagine glycosylation sites follow: Asn-330 and Asn-331. Residues 348–368 form a helical membrane-spanning segment; it reads AHVLAVLLFLALILQRTFLQA. Residues 369 to 420 lie on the Cytoplasmic side of the membrane; that stretch reads SYYVTIETGINLRGALLAMIYNKILRLSTSNLSMGEMTLGQINNLVAIETNQ. The helical transmembrane segment at 421–441 threads the bilayer; it reads LMWFLFLCPNLWAMPVQIIMG. Topologically, residues 442-452 are extracellular; it reads VILLYNLLGSS. Residues 453–473 form a helical membrane-spanning segment; that stretch reads ALVGAAVIVLLAPIQYFIATK. The Cytoplasmic segment spans residues 474–528; that stretch reads LAEAQKSTLDYSTERLKKTNEILKGIKLLKLYAWEHIFCKSVEETRMKELSSLKT. Residues 529–549 traverse the membrane as a helical segment; sequence FALYTSLSIFMNAAIPIAAVL. Residues 550–568 are Extracellular-facing; the sequence is ATFVTHAYASGNNLKPAEA. The chain crosses the membrane as a helical span at residues 569-589; the sequence is FASLSLFHILVTPLFLLSTVV. Over 590-986 the chain is Cytoplasmic; that stretch reads RFAVKAIISV…TCWWYLTSGG (397 aa). The region spanning 668–908 is the ABC transporter 1 domain; it reads IKVTNGYFSW…DVELYEHWKT (241 aa). Residue 701-708 participates in ATP binding; that stretch reads GQVGCGKS. The tract at residues 940–963 is disordered; it reads REAKAQMEDEDEEEEEEEDEDDNM. A compositionally biased stretch (acidic residues) spans 947–962; the sequence is EDEDEEEEEEEDEDDN. The helical transmembrane segment at 987 to 1007 threads the bilayer; the sequence is FFLLFLMIFSKLLKHSVIVAI. One can recognise an ABC transmembrane type-1 2 domain in the interval 990-1270; sequence LFLMIFSKLL…VVRNLADLEV (281 aa). The Extracellular portion of the chain corresponds to 1008–1030; the sequence is DYWLATWTSEYSINDPGKADQTF. A helical transmembrane segment spans residues 1031–1051; the sequence is YVAGFSILCGAGIFLCLVTSL. The Cytoplasmic segment spans residues 1052–1123; the sequence is TVEWMGLTAA…TLLCLSAIGM (72 aa). The chain crosses the membrane as a helical span at residues 1124–1144; the sequence is ISYATPVFLIALAPLGVAFYF. The Extracellular segment spans residues 1145-1241; that stretch reads IQKYFRVASK…IASISGSSNS (97 aa). A helical membrane pass occupies residues 1242-1262; the sequence is GLVGLGLLYALTITNYLNWVV. At 1263 to 1545 the chain is on the cytoplasmic side; the sequence is RNLADLEVQM…LFSTLVMTNK (283 aa). Residues 1308–1542 enclose the ABC transporter 2 domain; sequence IKIHDLCVRY…KNGLFSTLVM (235 aa). An ATP-binding site is contributed by 1342–1349; that stretch reads GRTGSGKS.

Belongs to the ABC transporter superfamily. ABCC family. Conjugate transporter (TC 3.A.1.208) subfamily. In terms of assembly, interacts with KCNJ11. Interacts with KCNJ8. As to expression, expressed at high levels in heart, skeletal muscle and ovary. Moderate levels are found in brain, tongue and pancreatic islets. Low levels are found in lung, testis and adrenal gland. Expressed at very low levels in stomach, colon, thyroid and pituitary.

The protein localises to the membrane. Subunit of ATP-sensitive potassium channels (KATP). Can form cardiac and smooth muscle-type KATP channels with KCNJ11. KCNJ11 forms the channel pore while ABCC9 is required for activation and regulation. Can form a sulfonylurea-sensitive but ATP-insensitive potassium channel with KCNJ8. This Rattus norvegicus (Rat) protein is ATP-binding cassette sub-family C member 9 (Abcc9).